Reading from the N-terminus, the 786-residue chain is Kazrin-A (786 aa).

The disordered stretch occupies residues 44-70 (EEPGEPQEHQQQQQQQNHQDAPVQRQK). The segment covering 52–62 (HQQQQQQQNHQ) has biased composition (low complexity). A coiled-coil region spans residues 92–270 (LLHEEVLRLQ…SLATLTKDVP (179 aa)). Positions 350 to 425 (MSDASVMEGE…LFDDSDSLSS (76 aa)) are disordered. 3 consecutive SAM domains span residues 457 to 522 (WRAG…YRDA), 535 to 599 (DHHW…LHTL), and 623 to 686 (WTCQ…SEEM). The disordered stretch occupies residues 703-760 (PLGTPPTLHRQSSLSSSSPSCHDDQQSLRRVKQQLGLSPKNLTARNISHQSRSGSFPR). The segment covering 742–758 (KNLTARNISHQSRSGSF) has biased composition (polar residues).

This sequence belongs to the kazrin family.

This Danio rerio (Zebrafish) protein is Kazrin-A (kazna).